The primary structure comprises 409 residues: Arginine deiminase (409 aa).

The Amidino-cysteine intermediate role is filled by Cys-399.

It belongs to the arginine deiminase family.

The protein resides in the cytoplasm. It carries out the reaction L-arginine + H2O = L-citrulline + NH4(+). The protein operates within amino-acid degradation; L-arginine degradation via ADI pathway; carbamoyl phosphate from L-arginine: step 1/2. The polypeptide is Arginine deiminase (arcA) (Latilactobacillus sakei (Lactobacillus sakei)).